Here is a 434-residue protein sequence, read N- to C-terminus: Nicotinate phosphoribosyltransferase (434 aa).

A Phosphohistidine; by autocatalysis modification is found at histidine 242.

It belongs to the NAPRTase family. Post-translationally, transiently phosphorylated on a His residue during the reaction cycle. Phosphorylation strongly increases the affinity for substrates and increases the rate of nicotinate D-ribonucleotide production. Dephosphorylation regenerates the low-affinity form of the enzyme, leading to product release.

The catalysed reaction is nicotinate + 5-phospho-alpha-D-ribose 1-diphosphate + ATP + H2O = nicotinate beta-D-ribonucleotide + ADP + phosphate + diphosphate. The protein operates within cofactor biosynthesis; NAD(+) biosynthesis; nicotinate D-ribonucleotide from nicotinate: step 1/1. Functionally, catalyzes the synthesis of beta-nicotinate D-ribonucleotide from nicotinate and 5-phospho-D-ribose 1-phosphate at the expense of ATP. This Rhizobium etli (strain ATCC 51251 / DSM 11541 / JCM 21823 / NBRC 15573 / CFN 42) protein is Nicotinate phosphoribosyltransferase.